Here is a 633-residue protein sequence, read N- to C-terminus: Chaperone protein DnaK (633 aa).

Residue threonine 196 is modified to Phosphothreonine; by autocatalysis. A disordered region spans residues 594–633 (NLYGQPGAEPQPETNGHAGGSKGGDGAVNAEYEVIDGDDK). Gly residues predominate over residues 610-619 (HAGGSKGGDG).

The protein belongs to the heat shock protein 70 family.

In terms of biological role, acts as a chaperone. This chain is Chaperone protein DnaK, found in Chlorobaculum tepidum (strain ATCC 49652 / DSM 12025 / NBRC 103806 / TLS) (Chlorobium tepidum).